The chain runs to 137 residues: MQANDSSNKVVYWGTGRRKAAIARVRLVPGQGEVIVNGKPGEIYFNRIANYIQSLKAPLETLGLEGEYNILVNAHGGGLTGQADAVKLGVARALCQLSPENRQPLKAEGYLTRDPRAKERKKYGLHKARKAPQYSKR.

The tract at residues 105 to 137 (LKAEGYLTRDPRAKERKKYGLHKARKAPQYSKR) is disordered. Residues 118-137 (KERKKYGLHKARKAPQYSKR) show a composition bias toward basic residues.

Belongs to the universal ribosomal protein uS9 family.

This chain is Small ribosomal subunit protein uS9 (rpsI), found in Synechocystis sp. (strain ATCC 27184 / PCC 6803 / Kazusa).